Consider the following 283-residue polypeptide: Dihydropteroate synthase type-1 (283 aa).

Residues 6–262 (VTVFGILNLT…APGDLRSAIT (257 aa)) enclose the Pterin-binding domain. Position 13 (N13) interacts with Mg(2+). Residues D86, N105, D177, K216, and 250–252 (RTH) each bind (7,8-dihydropterin-6-yl)methyl diphosphate.

It belongs to the DHPS family. Homodimer or homotrimer. Mg(2+) serves as cofactor.

The enzyme catalyses (7,8-dihydropterin-6-yl)methyl diphosphate + 4-aminobenzoate = 7,8-dihydropteroate + diphosphate. It functions in the pathway cofactor biosynthesis; tetrahydrofolate biosynthesis; 7,8-dihydrofolate from 2-amino-4-hydroxy-6-hydroxymethyl-7,8-dihydropteridine diphosphate and 4-aminobenzoate: step 1/2. Its function is as follows. Catalyzes the condensation of para-aminobenzoate (pABA) with 6-hydroxymethyl-7,8-dihydropterin diphosphate (DHPt-PP) to form 7,8-dihydropteroate (H2Pte), the immediate precursor of folate derivatives. Implicated in resistance to sulfonamide. The sequence is that of Dihydropteroate synthase type-1 (sulI) from Mycolicibacterium fortuitum (Mycobacterium fortuitum).